A 269-amino-acid polypeptide reads, in one-letter code: Regulatory protein RecX (269 aa).

Belongs to the RecX family.

Its subcellular location is the cytoplasm. In terms of biological role, modulates RecA activity. This is Regulatory protein RecX from Listeria monocytogenes serotype 4a (strain HCC23).